A 192-amino-acid polypeptide reads, in one-letter code: Lumican (192 aa).

LRR repeat units lie at residues 1–23, 26–46, 47–68, 69–90, 94–114, 115–136, 139–162, 164–185, and 186–192; these read LQWL…VFSK, QLKK…PLPK, SLED…DGLL, NLTF…AAFK, SLEY…GLPA, SLLT…YFKR, GLQY…SFNI, SLVE…NENL, and ENYYLEV.

The protein belongs to the small leucine-rich proteoglycan (SLRP) family. SLRP class II subfamily. Binds to laminin. Sulfated on tyrosine residue(s). Post-translationally, contains keratan sulfate.

The protein localises to the secreted. The protein resides in the extracellular space. Its subcellular location is the extracellular matrix. This is Lumican (LUM) from Oryctolagus cuniculus (Rabbit).